Here is a 361-residue protein sequence, read N- to C-terminus: Mannose-1-phosphate guanylyltransferase 1 (361 aa).

GDP-alpha-D-mannose-binding residues include Leu-6 and Val-7. Gly-9, Gly-11, Thr-12, Arg-13, and Lys-23 together coordinate diphosphate. GDP-alpha-D-mannose is bound by residues Gly-85, Asn-109, Asp-111, Gly-146, and Asn-173.

Belongs to the transferase hexapeptide repeat family. As to quaternary structure, interacts in vitro with CSN5A and CSN5B, but in planta only with CSN5B, which targets CYT1 for degradation in the dark by the 26S proteasome. Forms homodimers in the unliganded structure. The product-bound structure is composed of six dimers that form a dodecameric assembly.

The protein resides in the cytoplasm. It localises to the nucleus. It catalyses the reaction alpha-D-mannose 1-phosphate + GTP + H(+) = GDP-alpha-D-mannose + diphosphate. Its pathway is nucleotide-sugar biosynthesis; GDP-alpha-D-mannose biosynthesis; GDP-alpha-D-mannose from alpha-D-mannose 1-phosphate (GTP route): step 1/1. Functionally, essential protein during embryogenesis. Catalyzes a reaction of the Smirnoff-Wheeler pathway, the major route to ascorbate biosynthesis in plants. Plays an essential role in plant growth and development and cell-wall architecture. Provides GDP-mannose, used for cell wall carbohydrate biosynthesis, protein N-glycosylation, as well as for the biosynthesis of the antioxidant ascorbate. In Arabidopsis thaliana (Mouse-ear cress), this protein is Mannose-1-phosphate guanylyltransferase 1.